A 78-amino-acid chain; its full sequence is Large ribosomal subunit protein bL28 (78 aa).

The disordered stretch occupies residues 1 to 28; it reads MSAICQVTGRQPGYGKSVSHSHRRTSRR.

It belongs to the bacterial ribosomal protein bL28 family.

The sequence is that of Large ribosomal subunit protein bL28 from Corynebacterium diphtheriae (strain ATCC 700971 / NCTC 13129 / Biotype gravis).